A 289-amino-acid polypeptide reads, in one-letter code: Beta-lactamase Toho-2 (289 aa).

A signal peptide spans 1 to 28 (MVTKRVQRMMSAAAACIPLLLGSPTLYA). Residue S73 is the Acyl-ester intermediate of the active site. A substrate-binding site is contributed by 235 to 237 (KTG).

Belongs to the class-A beta-lactamase family.

It catalyses the reaction a beta-lactam + H2O = a substituted beta-amino acid. Inhibited 16-fold better by the beta-lactamase inhibitor tazobactam than by clavulanic acid. Functionally, hydrolyzes beta-lactam antibiotics such as penicillin G, carbenicillin, cephaloridine, cefoxitin, cefotaxime, ceftazidime, and aztreonam. Has especially increased relative hydrolysis rates for cephalothin, cephaloridine, cefotaxime and ceftizoxime. The chain is Beta-lactamase Toho-2 (bla) from Escherichia coli.